We begin with the raw amino-acid sequence, 362 residues long: Nicotinate-nucleotide--dimethylbenzimidazole phosphoribosyltransferase (362 aa).

Glutamate 321 functions as the Proton acceptor in the catalytic mechanism.

This sequence belongs to the CobT family.

The enzyme catalyses 5,6-dimethylbenzimidazole + nicotinate beta-D-ribonucleotide = alpha-ribazole 5'-phosphate + nicotinate + H(+). It functions in the pathway nucleoside biosynthesis; alpha-ribazole biosynthesis; alpha-ribazole from 5,6-dimethylbenzimidazole: step 1/2. In terms of biological role, catalyzes the synthesis of alpha-ribazole-5'-phosphate from nicotinate mononucleotide (NAMN) and 5,6-dimethylbenzimidazole (DMB). This is Nicotinate-nucleotide--dimethylbenzimidazole phosphoribosyltransferase from Clostridium tetani (strain Massachusetts / E88).